Here is a 283-residue protein sequence, read N- to C-terminus: ATP phosphoribosyltransferase (283 aa).

This sequence belongs to the ATP phosphoribosyltransferase family. Long subfamily. In terms of assembly, equilibrium between an active dimeric form, an inactive hexameric form and higher aggregates. Interconversion between the various forms is largely reversible and is influenced by the natural substrates and inhibitors of the enzyme. Mg(2+) is required as a cofactor.

Its subcellular location is the cytoplasm. The catalysed reaction is 1-(5-phospho-beta-D-ribosyl)-ATP + diphosphate = 5-phospho-alpha-D-ribose 1-diphosphate + ATP. It participates in amino-acid biosynthesis; L-histidine biosynthesis; L-histidine from 5-phospho-alpha-D-ribose 1-diphosphate: step 1/9. Feedback inhibited by histidine. Functionally, catalyzes the condensation of ATP and 5-phosphoribose 1-diphosphate to form N'-(5'-phosphoribosyl)-ATP (PR-ATP). Has a crucial role in the pathway because the rate of histidine biosynthesis seems to be controlled primarily by regulation of HisG enzymatic activity. This chain is ATP phosphoribosyltransferase, found in Mycobacterium sp. (strain KMS).